The chain runs to 399 residues: 3-sulfinopropanoyl-CoA desulfinase (399 aa).

Residues 121-124, S130, and 153-156 each bind FAD; these read ICIS and YWIT. 244-245 serves as a coordination point for substrate; sequence YN. Residues R273, Q340, S344, 367 to 371, and Q388 contribute to the FAD site; that span reads GGTAQ.

This sequence belongs to the acyl-CoA dehydrogenase family. In terms of assembly, homotrimer or homotetramer. The cofactor is FAD.

It catalyses the reaction 3-sulfinopropanoyl-CoA + H2O = propanoyl-CoA + sulfite + H(+). Functionally, catalyzes the conversion 3-sulfinopropanoyl-CoA (3SP-CoA) to propanoyl-CoA by abstraction of sulfite. Does not show dehydrogenase activity. This Variovorax paradoxus protein is 3-sulfinopropanoyl-CoA desulfinase.